Consider the following 354-residue polypeptide: Annexin A13 (354 aa).

4 Annexin repeats span residues 26-97, 98-177, 203-275, and 279-350; these read NDPN…MLLT, DTDK…ALLQ, NLVE…LTLN, and NRPK…ALIG. Methionine 39, glycine 41, glycine 43, threonine 44, glutamate 46, glutamate 83, methionine 111, glycine 113, glycine 115, glutamate 118, aspartate 163, aspartate 265, methionine 292, glycine 294, leucine 295, glycine 296, and glutamate 336 together coordinate Ca(2+).

The protein belongs to the annexin family. As to quaternary structure, homodimer.

The protein resides in the tegument. It is found in the secreted. It localises to the extracellular exosome. Its subcellular location is the host cell. Functionally, involved in reproduction of the worm. Involved in host-parasite interaction. Delivered into the host cell by means of parasite exosomes. Binds to acidic phospholipid membranes in a calcium-dependent manner in vitro. Causes aggregation of liposomes in the presence of calcium, but not in its absence. Likely to promote membrane fusion. May provide structural integrity within the tegument. The polypeptide is Annexin A13 (Schistosoma japonicum (Blood fluke)).